The sequence spans 758 residues: Dolichyl-phosphooligosaccharide-protein glycotransferase 2 (758 aa).

At 1-6 (MKRRYS) the chain is on the cytoplasmic side. A helical transmembrane segment spans residues 7-27 (ILIILLVAIFYRMITFRFKYL). Residues 28–92 (LGYDPYFHLA…KVFGVSLTTT (65 aa)) are Extracellular-facing. The short motif at 29–31 (GYD) is the DXD motif 1 element. Mn(2+) is bound at residue D31. Residues 93 to 113 (FKITPVIFGVLTVIFLYLSLL) form a helical membrane-spanning segment. Topologically, residues 114–120 (KLYDEKR) are cytoplasmic. Residues 121–141 (AFFGGFFLAISYGHVFRSMAN) form a helical membrane-spanning segment. Residues 142–145 (YYRG) lie on the Extracellular side of the membrane. Residues R144 and D146 each coordinate Mn(2+). The short motif at 144–146 (RGD) is the DXD motif 2 element. The helical transmembrane segment at 146–166 (DNYMLFWYSVALLGISLALGI) threads the bilayer. Over 167-175 (KKGKWKYKR) the chain is Cytoplasmic. 2 helical membrane-spanning segments follow: residues 176-196 (LIFYTLPVLASGFSAIFWQAY) and 197-217 (YPIFAFLLSNALLLAVGAFIL). Topologically, residues 218 to 226 (KKDKYLLDS) are cytoplasmic. The helical transmembrane segment at 227–247 (IILILSTAFGVLLANYLGGIF) threads the bilayer. At 248 to 281 (GYGMLGYAKWLGKSVAKKLGLEFGYLKDVYLILH) the chain is on the extracellular side. Residues 282–302 (LKYLVPISLSFVLVLILLGFL) form a helical membrane-spanning segment. Residues 303 to 310 (TKDIRIRS) lie on the Cytoplasmic side of the membrane. A helical transmembrane segment spans residues 311–331 (LFLGIASFIGIIILFKRFEAL). Topologically, residues 332-352 (KELSTGFGIFKEAPILETQPT) are extracellular. The short motif at 340-343 (IFKE) is the TIXE motif element. The helical transmembrane segment at 353-373 (SFKDLWAAFSLSFFLTPLFFI) threads the bilayer. Topologically, residues 374–379 (RFKKPR) are cytoplasmic. A helical transmembrane segment spans residues 380–400 (VEDFLTLGLIIPSVYMLKTWT). R401 is a topological domain (extracellular). R401 provides a ligand contact to a glycophospholipid. The helical transmembrane segment at 402–422 (FLFIGSMAIAIMSGIGIVELY) threads the bilayer. Residues 423–433 (EAIKPRLNGKK) are Cytoplasmic-facing. Residues 434 to 454 (ALATGIITLVILPGVIAGLSF) traverse the membrane as a helical segment. At 455 to 758 (KEVCSLHPEM…DRGVFRLSYN (304 aa)) the chain is on the extracellular side. The interacts with target acceptor peptide in protein substrate stretch occupies residues 488–490 (WWD). The WWDYG motif motif lies at 488 to 492 (WWDWG). A DK motif motif is present at residues 540-547 (DFLKFGAI).

The protein belongs to the STT3 family. Requires Mn(2+) as cofactor. Mg(2+) is required as a cofactor.

It is found in the cell membrane. It carries out the reaction an archaeal dolichyl phosphooligosaccharide + [protein]-L-asparagine = an archaeal dolichyl phosphate + a glycoprotein with the oligosaccharide chain attached by N-beta-D-glycosyl linkage to a protein L-asparagine.. The protein operates within protein modification; protein glycosylation. Functionally, oligosaccharyl transferase (OST) that catalyzes the initial transfer of a defined glycan (ManNAcXyl(2)GlcAMan(2)GalNAc in Pyrococcus) from the lipid carrier dolichol-monophosphate to an asparagine residue within an Asn-X-Ser/Thr consensus motif in nascent polypeptide chains, the first step in protein N-glycosylation. The sequence is that of Dolichyl-phosphooligosaccharide-protein glycotransferase 2 (aglB2) from Pyrococcus horikoshii (strain ATCC 700860 / DSM 12428 / JCM 9974 / NBRC 100139 / OT-3).